We begin with the raw amino-acid sequence, 242 residues long: Ubiquinone biosynthesis O-methyltransferase (242 aa).

The S-adenosyl-L-methionine site is built by R44, G64, D85, and M129.

This sequence belongs to the methyltransferase superfamily. UbiG/COQ3 family.

It carries out the reaction a 3-demethylubiquinol + S-adenosyl-L-methionine = a ubiquinol + S-adenosyl-L-homocysteine + H(+). The catalysed reaction is a 3-(all-trans-polyprenyl)benzene-1,2-diol + S-adenosyl-L-methionine = a 2-methoxy-6-(all-trans-polyprenyl)phenol + S-adenosyl-L-homocysteine + H(+). Its pathway is cofactor biosynthesis; ubiquinone biosynthesis. Functionally, O-methyltransferase that catalyzes the 2 O-methylation steps in the ubiquinone biosynthetic pathway. The polypeptide is Ubiquinone biosynthesis O-methyltransferase (Yersinia enterocolitica serotype O:8 / biotype 1B (strain NCTC 13174 / 8081)).